The chain runs to 644 residues: Heat shock protein SSC3, mitochondrial (644 aa).

It belongs to the heat shock protein 70 family.

The protein resides in the mitochondrion matrix. The protein localises to the mitochondrion nucleoid. Its function is as follows. Plays a role in facilitating the assembly of some protein complexes inside the mitochondria. It may initiate the events that lead to refolding of imported precursors in the matrix space. In Saccharomyces cerevisiae (strain ATCC 204508 / S288c) (Baker's yeast), this protein is Heat shock protein SSC3, mitochondrial (ECM10).